The primary structure comprises 443 residues: Exodeoxyribonuclease 7 large subunit (443 aa).

It belongs to the XseA family. Heterooligomer composed of large and small subunits.

The protein resides in the cytoplasm. The enzyme catalyses Exonucleolytic cleavage in either 5'- to 3'- or 3'- to 5'-direction to yield nucleoside 5'-phosphates.. Its function is as follows. Bidirectionally degrades single-stranded DNA into large acid-insoluble oligonucleotides, which are then degraded further into small acid-soluble oligonucleotides. In Stenotrophomonas maltophilia (strain R551-3), this protein is Exodeoxyribonuclease 7 large subunit.